Here is a 52-residue protein sequence, read N- to C-terminus: Eukaryotic translation initiation factor 5A (52 aa).

Position 42 is a hypusine (lysine 42).

This sequence belongs to the eIF-5A family. Lys-42 undergoes hypusination, a unique post-translational modification that consists in the addition of a butylamino group from spermidine to lysine side chain, leading to the formation of the unusual amino acid hypusine. eIF-5As are the only known proteins to undergo this modification, which is essential for their function.

It localises to the cytoplasm. Functionally, translation factor that promotes translation elongation and termination, particularly upon ribosome stalling at specific amino acid sequence contexts. Binds between the exit (E) and peptidyl (P) site of the ribosome and promotes rescue of stalled ribosome: specifically required for efficient translation of polyproline-containing peptides as well as other motifs that stall the ribosome. Acts as a ribosome quality control (RQC) cofactor by joining the RQC complex to facilitate peptidyl transfer during CAT tailing step. The sequence is that of Eukaryotic translation initiation factor 5A from Schistosoma mansoni (Blood fluke).